The chain runs to 217 residues: UPF0502 protein Smlt0097 (217 aa).

Belongs to the UPF0502 family.

The protein is UPF0502 protein Smlt0097 of Stenotrophomonas maltophilia (strain K279a).